Reading from the N-terminus, the 141-residue chain is Large ribosomal subunit protein uL11 (141 aa).

It belongs to the universal ribosomal protein uL11 family. Part of the ribosomal stalk of the 50S ribosomal subunit. Interacts with L10 and the large rRNA to form the base of the stalk. L10 forms an elongated spine to which L12 dimers bind in a sequential fashion forming a multimeric L10(L12)X complex. In terms of processing, one or more lysine residues are methylated.

In terms of biological role, forms part of the ribosomal stalk which helps the ribosome interact with GTP-bound translation factors. The chain is Large ribosomal subunit protein uL11 from Streptococcus suis (strain 98HAH33).